A 197-amino-acid chain; its full sequence is Phosphoheptose isomerase (197 aa).

One can recognise an SIS domain in the interval 34-196 (MVNCLLGGNK…DRTLFPQDEQ (163 aa)). 49 to 51 (NGG) is a substrate binding site. Zn(2+)-binding residues include His-58 and Glu-62. Residues Glu-62, 91 to 92 (ND), 117 to 119 (STS), Ser-122, and Gln-172 each bind substrate. Residues Gln-172 and His-180 each contribute to the Zn(2+) site.

This sequence belongs to the SIS family. GmhA subfamily. Homotetramer. The cofactor is Zn(2+).

The protein localises to the cytoplasm. It catalyses the reaction 2 D-sedoheptulose 7-phosphate = D-glycero-alpha-D-manno-heptose 7-phosphate + D-glycero-beta-D-manno-heptose 7-phosphate. The protein operates within carbohydrate biosynthesis; D-glycero-D-manno-heptose 7-phosphate biosynthesis; D-glycero-alpha-D-manno-heptose 7-phosphate and D-glycero-beta-D-manno-heptose 7-phosphate from sedoheptulose 7-phosphate: step 1/1. Its function is as follows. Catalyzes the isomerization of sedoheptulose 7-phosphate in D-glycero-D-manno-heptose 7-phosphate. The sequence is that of Phosphoheptose isomerase from Shewanella pealeana (strain ATCC 700345 / ANG-SQ1).